Here is a 452-residue protein sequence, read N- to C-terminus: 1,3-beta-glucanosyltransferase gel1 (452 aa).

A signal peptide spans 1 to 19; it reads MKASAVTAALAVGASTVLA. An intrachain disulfide couples Cys71 to Cys100. Residues Tyr89, Asn159, Glu160, Asp201, and Arg206 each contribute to the (1,3-beta-D-glucosyl)n site. Residue Glu160 is the Proton donor of the active site. Cystine bridges form between Cys215-Cys345 and Cys233-Cys264. An N-linked (GlcNAc...) asparagine glycan is attached at Asn249. The Nucleophile role is filled by Glu261. Residue Tyr292 coordinates (1,3-beta-D-glucosyl)n. Residues 325–340 show a composition bias toward polar residues; the sequence is EKTSNPSGDGNYNKTG. A disordered region spans residues 325–419; that stretch reads EKTSNPSGDG…SGTSTSSKGA (95 aa). A glycan (N-linked (GlcNAc...) asparagine) is linked at Asn337. Residues 393–419 are compositionally biased toward low complexity; the sequence is STATAEPGSGSATGSSSSGTSTSSKGA. Ala419 is lipidated: GPI-like-anchor amidated alanine. A propeptide spans 420 to 452 (removed in mature form); sequence AAGLTVPSLTMAPVVVGAVTLLSTVFGAGLVLL.

It belongs to the glycosyl hydrolase 72 family. Post-translationally, the GPI-like anchor contains a phosphoceramide lipid group.

Its subcellular location is the cell membrane. In terms of biological role, splits internally a 1,3-beta-glucan molecule and transfers the newly generated reducing end (the donor) to the non-reducing end of another 1,3-beta-glucan molecule (the acceptor) forming a 1,3-beta linkage, resulting in the elongation of 1,3-beta-glucan chains in the cell wall. Involved in cell wall morphogenesis. This Aspergillus fumigatus (strain ATCC MYA-4609 / CBS 101355 / FGSC A1100 / Af293) (Neosartorya fumigata) protein is 1,3-beta-glucanosyltransferase gel1 (gel1).